The primary structure comprises 429 residues: 3-phosphoshikimate 1-carboxyvinyltransferase (429 aa).

Positions 23, 24, and 28 each coordinate 3-phosphoshikimate. Lys-23 is a binding site for phosphoenolpyruvate. The phosphoenolpyruvate site is built by Gly-95 and Arg-123. Residues Ser-168, Gln-170, Asp-316, and Lys-343 each coordinate 3-phosphoshikimate. Gln-170 serves as a coordination point for phosphoenolpyruvate. The active-site Proton acceptor is Asp-316. Residues Arg-347 and Arg-389 each contribute to the phosphoenolpyruvate site.

It belongs to the EPSP synthase family. Monomer.

The protein resides in the cytoplasm. It carries out the reaction 3-phosphoshikimate + phosphoenolpyruvate = 5-O-(1-carboxyvinyl)-3-phosphoshikimate + phosphate. The protein operates within metabolic intermediate biosynthesis; chorismate biosynthesis; chorismate from D-erythrose 4-phosphate and phosphoenolpyruvate: step 6/7. Its function is as follows. Catalyzes the transfer of the enolpyruvyl moiety of phosphoenolpyruvate (PEP) to the 5-hydroxyl of shikimate-3-phosphate (S3P) to produce enolpyruvyl shikimate-3-phosphate and inorganic phosphate. The sequence is that of 3-phosphoshikimate 1-carboxyvinyltransferase from Bacillus anthracis (strain A0248).